Consider the following 388-residue polypeptide: Amylovoran biosynthesis protein AmsL (388 aa).

Helical transmembrane passes span 24–44, 47–67, 97–117, 231–251, 297–317, and 359–379; these read VLLS…ISWF, LPQL…LGSL, FTVI…LGLF, FVIM…SPVI, FYWN…VWIW, and ISVS…NLFI.

It belongs to the polysaccharide synthase family.

It is found in the cell membrane. The protein operates within glycan metabolism; exopolysaccharide biosynthesis. Involved in the biosynthesis of amylovoran which functions as a virulence factor. The protein is Amylovoran biosynthesis protein AmsL (amsL) of Erwinia amylovora (Fire blight bacteria).